A 449-amino-acid polypeptide reads, in one-letter code: Polyadenylation factor subunit 2 (449 aa).

WD repeat units lie at residues 77 to 116, 119 to 158, 161 to 200, 203 to 242, 245 to 285, 288 to 328, and 337 to 376; these read KVKH…FESI, AHDS…VKVL, AHTE…QERV, GHHW…NVST, GLKH…RELQ, RDDM…SNST, and AHEK…DPNA. Positions 411–432 are disordered; the sequence is LPPANETNLGTPQPSILGSESI. Polar residues predominate over residues 415-432; that stretch reads NETNLGTPQPSILGSESI.

It is found in the nucleus. Functionally, required for 3'-end cleavage and polyadenylation of pre-mRNAs. Also involved in chromosome segregation where it has a role in chromosome attachment to the mitotic spindle. The chain is Polyadenylation factor subunit 2 (PSF2) from Eremothecium gossypii (strain ATCC 10895 / CBS 109.51 / FGSC 9923 / NRRL Y-1056) (Yeast).